The primary structure comprises 381 residues: PqqA peptide cyclase (381 aa).

One can recognise a Radical SAM core domain in the interval 12–228 (VGPPLWLLAE…AEYRQRLAAE (217 aa)). [4Fe-4S] cluster contacts are provided by C26, C30, and C33.

Belongs to the radical SAM superfamily. PqqE family. Interacts with PqqD. The interaction is necessary for activity of PqqE. It depends on [4Fe-4S] cluster as a cofactor.

The catalysed reaction is [PQQ precursor protein] + S-adenosyl-L-methionine = E-Y cross-linked-[PQQ precursor protein] + 5'-deoxyadenosine + L-methionine + H(+). It participates in cofactor biosynthesis; pyrroloquinoline quinone biosynthesis. Its function is as follows. Catalyzes the cross-linking of a glutamate residue and a tyrosine residue in the PqqA protein as part of the biosynthesis of pyrroloquinoline quinone (PQQ). In Pseudomonas aeruginosa (strain LESB58), this protein is PqqA peptide cyclase.